The primary structure comprises 115 residues: MTVQPFSPDSDLTLDEAMDELVSAEDFLEFFGVPFDQDVVHVNRLHIMQRYHDYLSKAGDLDEHDDQARYAVFQKLLARAYLDFVESDALTEKVFKVFRMHEPQKTFVSIDQLLS.

Belongs to the NifW family. In terms of assembly, homotrimer; associates with NifD.

Its function is as follows. May protect the nitrogenase Fe-Mo protein from oxidative damage. The protein is Nitrogenase-stabilizing/protective protein NifW of Azotobacter vinelandii (strain DJ / ATCC BAA-1303).